A 538-amino-acid polypeptide reads, in one-letter code: Retinoblastoma-binding protein 5 (538 aa).

2 WD repeats span residues 22 to 63 (DCIS…KIIS) and 64 to 103 (AHIHPVCSLCWSRDGHKLVSASTDNIVSQWDVLSGDCDQR). Residue Lys129 forms a Glycyl lysine isopeptide (Lys-Gly) (interchain with G-Cter in SUMO2) linkage. WD repeat units follow at residues 148–188 (DDDS…LVAS), 196–235 (SNTTAIKSIEFARKGSCFLINTADRIIRVYDGREILTCGR), 249–291 (VNRT…KILH), and 293–331 (TRGELLLDVAWHPVRPIIASISSGVVSIWAQNQVENWSA). Thr252 is subject to Phosphothreonine; by CDK1. The segment at 330–366 (SAFAPDFKELDENVEYEERESEFDIEDEDKSEPEQTG) is interaction with ASH2L. Over residues 344 to 360 (EYEERESEFDIEDEDKS) the composition is skewed to acidic residues. The segment at 344–377 (EYEERESEFDIEDEDKSEPEQTGADAAEDEEVDV) is disordered. Position 350 is a phosphoserine (Ser350). Residues 371–380 (EDEEVDVTSV) are interaction with WDR5. Ser388 and Ser389 each carry phosphoserine. Residues 408–538 (VEDPEENPYG…TAGGAISELL (131 aa)) form a disordered region. Positions 479–490 (SKKKQAGRPKGS) are enriched in basic residues. Positions 491–510 (KGKEKDSPFKPKLYKGDRGL) are enriched in basic and acidic residues. Phosphoserine; by CDK1 is present on Ser497. The residue at position 525 (Ser525) is a Phosphoserine.

As to quaternary structure, component of the SET1 complex, at least composed of the catalytic subunit (SETD1A or SETD1B), WDR5, WDR82, RBBP5, ASH2L/ASH2, CXXC1/CFP1, HCFC1 and DPY30. Core component of several methyltransferase-containing complexes including MLL1/MLL, MLL2/3 (also named ASCOM complex) and MLL4/WBP7. Each complex is at least composed of ASH2L, RBBP5, WDR5, DPY30, one or more specific histone methyltransferases (KMT2A/MLL1, KMT2D/MLL2, KMT2C/MLL3 and KMT2B/MLL4), and the facultative components PAGR1, BACC1, CHD8, E2F6, HCFC1, HCFC2, HSP70, INO80C, KDM6A, KANSL1, LAS1L, MAX, MCRS1, MEN1, MGA, MYST1/MOF, NCOA6, PAXIP1/PTIP, PELP1, PHF20, PRP31, RING2, RUVB1/TIP49A, RUVB2/TIP49B, SENP3, TAF1, TAF4, TAF6, TAF7, TAF9, TEX10 and alpha- and beta-tubulin. Component of a histone methylation complex composed of at least ZNF335, RBBP5, ASH2L and WDR5; the complex may have histone H3-specific methyltransferase activity, however does not have specificity for 'Lys-4' of histone H3. Interacts with ZNF335. Interacts with ASH2L; the interaction is direct. Interacts with WDR5; the interaction is direct. Components of the ZNF335-RBBP5-ASH2L-WDR5 histone methylation complex may associate with components of a nuclear receptor-mediated transcription complex to form a complex at least composed of ZNF335, HCFC1, CCAR2, EMSY, MKI67, RBBP5, ASH2L and WDR5. Within this complex interacts with EMSY. Found in a complex with RBBP5, ASH2L, DPY30, KMT2A, KMT2D and WDR5. Interacts with SETD1A. Interacts with WDR82. Ubiquitously expressed.

The protein resides in the nucleus. In embryonic stem (ES) cells, plays a crucial role in the differentiation potential, particularly along the neural lineage, regulating gene induction and H3 'Lys-4' methylation at key developmental loci, including that mediated by retinoic acid. Does not affect ES cell self-renewal. Component or associated component of some histone methyltransferase complexes which regulates transcription through recruitment of those complexes to gene promoters. As part of the MLL1/MLL complex, involved in mono-, di- and trimethylation at 'Lys-4' of histone H3. Histone H3 'Lys-4' methylation represents a specific tag for epigenetic transcriptional activation. In association with ASH2L and WDR5, stimulates the histone methyltransferase activities of KMT2A, KMT2B, KMT2C, KMT2D, SETD1A and SETD1B. The polypeptide is Retinoblastoma-binding protein 5 (RBBP5) (Homo sapiens (Human)).